Reading from the N-terminus, the 156-residue chain is Small ribosomal subunit protein uS7c (156 aa).

It belongs to the universal ribosomal protein uS7 family. In terms of assembly, part of the 30S ribosomal subunit.

It localises to the plastid. The protein resides in the chloroplast. Its function is as follows. One of the primary rRNA binding proteins, it binds directly to 16S rRNA where it nucleates assembly of the head domain of the 30S subunit. The protein is Small ribosomal subunit protein uS7c (rps7) of Cycas revoluta (Sago palm).